We begin with the raw amino-acid sequence, 303 residues long: Mitochondrial basic amino acids transporter (303 aa).

Helical transmembrane passes span 2–22 (ALDFLAGCAGGVAGVLVGHPF), 61–81 (GLGSPLMGLTFINALVFGVQG), 96–116 (FLAGAAAGAIQCVICCPMELA), 153–172 (GMVSTLLRETPSFGVYFLTY), 187–207 (LLVPKLLLAGGTSGIVSWLST), and 255–275 (LLRAFPVNAATFATVTVVLTY). 3 Solcar repeats span residues 2-86 (ALDF…TLRA), 90-178 (DSPL…LTRA), and 185-275 (DRLL…VLTY). Positions 282–303 (GPEGEAVPAAPAGPALAQPSSL) are disordered. Low complexity predominate over residues 284-303 (EGEAVPAAPAGPALAQPSSL).

This sequence belongs to the mitochondrial carrier (TC 2.A.29) family.

The protein resides in the mitochondrion inner membrane. The catalysed reaction is L-lysine(out) + L-arginine(in) = L-lysine(in) + L-arginine(out). It catalyses the reaction L-histidine(out) + L-arginine(in) = L-histidine(in) + L-arginine(out). The enzyme catalyses L-ornithine(in) + L-arginine(out) = L-ornithine(out) + L-arginine(in). It carries out the reaction L-homoarginine(in) + L-arginine(out) = L-homoarginine(out) + L-arginine(in). The catalysed reaction is N(omega)-methyl-L-arginine(in) + L-arginine(out) = N(omega)-methyl-L-arginine(out) + L-arginine(in). It catalyses the reaction L-arginine(in) = L-arginine(out). The enzyme catalyses L-lysine(in) = L-lysine(out). It carries out the reaction L-ornithine(in) = L-ornithine(out). The catalysed reaction is L-histidine(out) = L-histidine(in). Mitochondrial transporter of arginine, lysine, homoarginine, methylarginine and, to a much lesser extent, ornithine and histidine. Does not transport carnitine nor acylcarnitines. Functions by both counter-exchange and uniport mechanisms. Plays a physiological role in the import of basic amino acids into mitochondria for mitochondrial protein synthesis and amino acid degradation. The chain is Mitochondrial basic amino acids transporter from Homo sapiens (Human).